The chain runs to 339 residues: DnaJ homolog subfamily C member 22 (339 aa).

Positions 4-50 constitute a TM2 domain; the sequence is GLLMTYVLWALGGPVGLHHLYLGRDSHALLWMLTLGGGGLGWLWEFW. 7 helical membrane passes run 5-25, 30-50, 81-101, 105-125, 135-155, 185-205, and 218-238; these read LLMTYVLWALGGPVGLHHLYL, HALLWMLTLGGGGLGWLWEFW, FASQIVVGVYFGLVALVSLSS, FYIVGLPLAVGLGVLLVAAVG, LGAAFLTSPVFYGRPIAILPI, VGLAYLAFTGPLAYSTMYNTA, and FLSWFSFFPLLGRLVESVLLL. The 63-residue stretch at 277–339 folds into the J domain; it reads LAHQVLGVPE…LSQPKKPRAS (63 aa).

The protein resides in the membrane. Its function is as follows. May function as a co-chaperone. This chain is DnaJ homolog subfamily C member 22 (Dnajc22), found in Mus musculus (Mouse).